A 361-amino-acid polypeptide reads, in one-letter code: Peptide chain release factor 1 (361 aa).

Gln-236 bears the N5-methylglutamine mark. Over residues 285–309 (TAKDSARAADRKAQVGSGDRSERIR) the composition is skewed to basic and acidic residues. The interval 285–313 (TAKDSARAADRKAQVGSGDRSERIRTYNF) is disordered.

The protein belongs to the prokaryotic/mitochondrial release factor family. In terms of processing, methylated by PrmC. Methylation increases the termination efficiency of RF1.

It localises to the cytoplasm. Functionally, peptide chain release factor 1 directs the termination of translation in response to the peptide chain termination codons UAG and UAA. This is Peptide chain release factor 1 from Methylorubrum populi (strain ATCC BAA-705 / NCIMB 13946 / BJ001) (Methylobacterium populi).